Reading from the N-terminus, the 381-residue chain is MDVTFLTKNVQINGTQFKILLQNGQGECALIALANVLLISPAHARYAQEISRLVRGKETVTLNELVQTLADMGVQNPNGTDVDKQQLLQILPQLYSGLNINPEFNGSFEDGVEMSIFRLYNVGIVHGWIIDGDNDPNSYEHVSKYSYMGAQKVLVQSYEIQKNNAQFENSEQIQSDAPYLKSFLARSATQLTEYGLTHLREILVERSYAVLFRNDHFCTLYKNNGELFTLVTDPTYRNRKDINWQSLKSVNGSQDSYYTGNFIPTSLERTETTATGQNESYISNPFSDQNTGHVTSNQVNSGASGVQQIEDDEELARRLQEQEDMRAANNMQNGYANNGRNHQRERFERPEKNSKKNKFLPFNGSNKEKKRDKLKKNCVIM.

The segment covering 331–340 has biased composition (polar residues); the sequence is MQNGYANNGR. A disordered region spans residues 331–381; that stretch reads MQNGYANNGRNHQRERFERPEKNSKKNKFLPFNGSNKEKKRDKLKKNCVIM. Residues 342–354 show a composition bias toward basic and acidic residues; that stretch reads HQRERFERPEKNS. The segment covering 372–381 has biased composition (basic residues); the sequence is DKLKKNCVIM.

The protein localises to the cytoplasm. It localises to the nucleus. This is an uncharacterized protein from Saccharomyces cerevisiae (strain ATCC 204508 / S288c) (Baker's yeast).